The following is a 516-amino-acid chain: Delta(24)-sterol reductase (516 aa).

Positions 1–22 (MEPAVSLAVCALLFLLWVRVKG) are cleaved as a signal peptide. Over 23-31 (LEFVLIHQR) the chain is Lumenal. A helical transmembrane segment spans residues 32–52 (WVFVCLFLLPLSLIFDIYYYV). The Cytoplasmic segment spans residues 53–516 (RAWVVFKLSS…YDKICKAARH (464 aa)). In terms of domain architecture, FAD-binding PCMH-type spans 58–234 (FKLSSAPRLH…VAAEIRIIPA (177 aa)). FAD is bound at residue 163–175 (TVGGLIMGTGIES).

Belongs to the FAD-binding oxidoreductase/transferase type 4 family. As to quaternary structure, interacts with DHCR7; this interaction regulates DHCR7 activity. FAD is required as a cofactor.

The protein localises to the endoplasmic reticulum membrane. It localises to the golgi apparatus membrane. It carries out the reaction cholesterol + NADP(+) = desmosterol + NADPH + H(+). The catalysed reaction is lanosterol + NADPH + H(+) = 24,25-dihydrolanosterol + NADP(+). It catalyses the reaction 5alpha-cholest-8-en-3beta-ol + NADP(+) = zymosterol + NADPH + H(+). It functions in the pathway steroid biosynthesis; cholesterol biosynthesis. Functionally, catalyzes the reduction of the delta-24 double bond of sterol intermediates during cholesterol biosynthesis. In addition to its cholesterol-synthesizing activity, can protect cells from oxidative stress by reducing caspase 3 activity during apoptosis induced by oxidative stress. Also protects against amyloid-beta peptide-induced apoptosis. The protein is Delta(24)-sterol reductase (DHCR24) of Macaca fascicularis (Crab-eating macaque).